Consider the following 343-residue polypeptide: Heat-inducible transcription repressor HrcA (343 aa).

This sequence belongs to the HrcA family.

Its function is as follows. Negative regulator of class I heat shock genes (grpE-dnaK-dnaJ and groELS operons). Prevents heat-shock induction of these operons. The sequence is that of Heat-inducible transcription repressor HrcA from Natranaerobius thermophilus (strain ATCC BAA-1301 / DSM 18059 / JW/NM-WN-LF).